The chain runs to 509 residues: Proto-oncogene tyrosine-protein kinase LCK (509 aa).

Glycine 2 carries N-myristoyl glycine lipidation. Residues 2–72 (GCGCSSHLED…DNLVIALHSY (71 aa)) form an interactions with CD4 and CD8 region. S-palmitoyl cysteine attachment occurs at residues cysteine 3 and cysteine 5. An SH3 domain is found at 61 to 121 (LQDNLVIALH…PFNFVAKANS (61 aa)). A Glycyl lysine isopeptide (Lys-Gly) (interchain with G-Cter in ubiquitin) cross-link involves residue lysine 99. Residue serine 102 is modified to Phosphoserine. The SH2 domain maps to 127-224 (WFFKNLSRKD…GLCTRLSRPC (98 aa)). The tract at residues 154–242 (RESESTAGSF…WWEDEWEVPR (89 aa)) is interaction with PTPRH. Threonine 159 is modified (phosphothreonine). Serine 162 is subject to Phosphoserine. Position 192 is a phosphotyrosine (tyrosine 192). The residue at position 194 (serine 194) is a Phosphoserine. The Protein kinase domain maps to 245-498 (LKLVERLGAG…YLRSVLEDFF (254 aa)). Residues 251-259 (LGAGQFGEV) and lysine 273 contribute to the ATP site. A Glycyl lysine isopeptide (Lys-Gly) (interchain with G-Cter in ubiquitin) cross-link involves residue lysine 276. The active-site Proton acceptor is aspartate 364. The residue at position 394 (tyrosine 394) is a Phosphotyrosine; by autocatalysis. Tyrosine 505 is subject to Phosphotyrosine; by CSK.

This sequence belongs to the protein kinase superfamily. Tyr protein kinase family. Binds to the cytoplasmic domain of cell surface receptors, such as AXL, CD2, CD4, CD5, CD8, CD44, CD45 and CD122. Also binds to effector molecules, such as PI4K, VAV1, RASA1, FYB1 and to other protein kinases including CDK1, RAF1, ZAP70 and SYK. Binds to phosphatidylinositol 3'-kinase (PI3K) from T-lymphocytes through its SH3 domain and to the tyrosine phosphorylated form of KHDRBS1/p70 through its SH2 domain. Interacts with SQSTM1. Interacts with phosphorylated LIME1. Interacts with CBLB and PTPRH. Interacts with RUNX3. Forms a signaling complex with EPHA1, PTK2B and PI3-KINASE; upon activation by EFNA1 which may regulate T-lymphocytes migration. Associates with ZAP70 and RHOH; these interactions allow LCK-mediated RHOH and CD3 subunit phosphorylations in the presence of functional ZAP70. Interacts with Saimiriine herpesvirus 2 TIP. Interacts with UNC119; this interaction plays a crucial role in activation of LCK. Interacts with CEACAM1 (via cytoplasmic domain); mediates CEACAM1 phosphorylation resulting in PTPN6 recruitment that dephosphorylates TCR stimulation-induced CD247 and ZAP70. Interacts with CD160. Interacts with CD48. Post-translationally, autophosphorylated on Tyr-394, increasing enzymatic activity, this site is dephosphorylated by PTN22. Phosphorylated on Tyr-505 by CSK, decreasing activity. Dephosphorylated by PTPRC/CD45. Dephosphorylation at Tyr-394 by PTPN2 negatively regulates T-cells differentiation. Dephosphorylation at Tyr-394 by DUSP22 negatively regulates T-cell receptor signaling. In terms of processing, myristoylation is required prior to palmitoylation. Palmitoylation regulates association with the plasma membrane and could be mediated by ZDHHC2. Post-translationally, 'Lys-63'-linked ubiquitinated at Lys-99 and Lys-276 by UBR2; this modification is required for autophosphorylation at Tyr-394. In terms of tissue distribution, expressed specifically in lymphoid cells.

The protein resides in the cell membrane. It localises to the cytoplasm. It is found in the cytosol. The enzyme catalyses L-tyrosyl-[protein] + ATP = O-phospho-L-tyrosyl-[protein] + ADP + H(+). Its activity is regulated as follows. The relative activities of the inhibitory tyrosine-protein kinase CSK and the activating tyrosine-protein phosphatase PTPRC/CD45 determine the level of LCK activity. These interactions allow rapid and efficient activation of LCK in response to TCR stimulation. Non-receptor tyrosine-protein kinase that plays an essential role in the selection and maturation of developing T-cells in the thymus and in the function of mature T-cells. Plays a key role in T-cell antigen receptor (TCR)-linked signal transduction pathways. Constitutively associated with the cytoplasmic portions of the CD4 and CD8 surface receptors. Association of the TCR with a peptide antigen-bound MHC complex facilitates the interaction of CD4 and CD8 with MHC class II and class I molecules, respectively, thereby recruiting the associated LCK protein to the vicinity of the TCR/CD3 complex. LCK then phosphorylates tyrosine residues within the immunoreceptor tyrosine-based activation motifs (ITAM) of the cytoplasmic tails of the TCR-gamma chains and CD3 subunits, initiating the TCR/CD3 signaling pathway. Once stimulated, the TCR recruits the tyrosine kinase ZAP70, that becomes phosphorylated and activated by LCK. Following this, a large number of signaling molecules are recruited, ultimately leading to lymphokine production. LCK also contributes to signaling by other receptor molecules. Associates directly with the cytoplasmic tail of CD2, which leads to hyperphosphorylation and activation of LCK. Also plays a role in the IL2 receptor-linked signaling pathway that controls the T-cell proliferative response. Binding of IL2 to its receptor results in increased activity of LCK. Is expressed at all stages of thymocyte development and is required for the regulation of maturation events that are governed by both pre-TCR and mature alpha beta TCR. Phosphorylates other substrates including RUNX3, PTK2B/PYK2, the microtubule-associated protein MAPT, RHOH or TYROBP. This chain is Proto-oncogene tyrosine-protein kinase LCK (LCK), found in Saimiri sciureus (Common squirrel monkey).